Here is a 389-residue protein sequence, read N- to C-terminus: Probable inactive purple acid phosphatase 29 (389 aa).

The N-terminal stretch at 1–34 (MADNRRRRSLFDFLLFSVFLGLACLCLSPIPATA) is a signal peptide. The N-linked (GlcNAc...) asparagine glycan is linked to N80. N136 is a binding site for substrate. N136 is a binding site for Zn(2+). Residues N191 and N267 are each glycosylated (N-linked (GlcNAc...) asparagine). H303 serves as a coordination point for Zn(2+). Residue 303-305 (HDH) coordinates substrate. H305 provides a ligand contact to Fe cation. N-linked (GlcNAc...) asparagine glycosylation occurs at N380.

It belongs to the metallophosphoesterase superfamily. Purple acid phosphatase family. Homodimer. Requires Fe cation as cofactor. Zn(2+) is required as a cofactor. In terms of tissue distribution, expressed in roots, stems, leaves, flowers and siliques.

It is found in the secreted. This chain is Probable inactive purple acid phosphatase 29 (PAP29), found in Arabidopsis thaliana (Mouse-ear cress).